We begin with the raw amino-acid sequence, 363 residues long: uncharacterized protein (363 aa).

This is an uncharacterized protein from Saccharomyces cerevisiae (strain ATCC 204508 / S288c) (Baker's yeast).